The primary structure comprises 907 residues: Protein translocase subunit SecA (907 aa).

ATP contacts are provided by residues Q87, 105 to 109 (GEGKT), and D512. The tract at residues 834-907 (QEDVERMEEQ…KKYKQCHGKI (74 aa)) is disordered. Basic and acidic residues-rich tracts occupy residues 836–853 (DVER…EAAR) and 873–888 (EEAH…KVGR). Residues C892, C894, C903, and H904 each contribute to the Zn(2+) site. The segment covering 898–907 (KKYKQCHGKI) has biased composition (basic residues).

It belongs to the SecA family. In terms of assembly, monomer and homodimer. Part of the essential Sec protein translocation apparatus which comprises SecA, SecYEG and auxiliary proteins SecDF-YajC and YidC. Zn(2+) is required as a cofactor.

It localises to the cell inner membrane. The protein resides in the cytoplasm. It carries out the reaction ATP + H2O + cellular proteinSide 1 = ADP + phosphate + cellular proteinSide 2.. Part of the Sec protein translocase complex. Interacts with the SecYEG preprotein conducting channel. Has a central role in coupling the hydrolysis of ATP to the transfer of proteins into and across the cell membrane, serving both as a receptor for the preprotein-SecB complex and as an ATP-driven molecular motor driving the stepwise translocation of polypeptide chains across the membrane. This is Protein translocase subunit SecA from Aliivibrio fischeri (strain MJ11) (Vibrio fischeri).